The chain runs to 356 residues: S-adenosylmethionine:tRNA ribosyltransferase-isomerase (356 aa).

This sequence belongs to the QueA family. As to quaternary structure, monomer.

It localises to the cytoplasm. The enzyme catalyses 7-aminomethyl-7-carbaguanosine(34) in tRNA + S-adenosyl-L-methionine = epoxyqueuosine(34) in tRNA + adenine + L-methionine + 2 H(+). It participates in tRNA modification; tRNA-queuosine biosynthesis. Transfers and isomerizes the ribose moiety from AdoMet to the 7-aminomethyl group of 7-deazaguanine (preQ1-tRNA) to give epoxyqueuosine (oQ-tRNA). In Nitrosospira multiformis (strain ATCC 25196 / NCIMB 11849 / C 71), this protein is S-adenosylmethionine:tRNA ribosyltransferase-isomerase.